Reading from the N-terminus, the 352-residue chain is N-acetyl-gamma-glutamyl-phosphate reductase (352 aa).

Residue C151 is part of the active site.

It belongs to the NAGSA dehydrogenase family. Type 1 subfamily.

The protein localises to the cytoplasm. It catalyses the reaction N-acetyl-L-glutamate 5-semialdehyde + phosphate + NADP(+) = N-acetyl-L-glutamyl 5-phosphate + NADPH + H(+). Its pathway is amino-acid biosynthesis; L-arginine biosynthesis; N(2)-acetyl-L-ornithine from L-glutamate: step 3/4. In terms of biological role, catalyzes the NADPH-dependent reduction of N-acetyl-5-glutamyl phosphate to yield N-acetyl-L-glutamate 5-semialdehyde. This Renibacterium salmoninarum (strain ATCC 33209 / DSM 20767 / JCM 11484 / NBRC 15589 / NCIMB 2235) protein is N-acetyl-gamma-glutamyl-phosphate reductase.